We begin with the raw amino-acid sequence, 338 residues long: Lipoate-protein ligase A (338 aa).

One can recognise a BPL/LPL catalytic domain in the interval 29–216 (PATQRVLFLW…AFFAHYGERV (188 aa)). Residues Arg-71, 76–79 (GAVF), and Lys-134 contribute to the ATP site. A (R)-lipoate-binding site is contributed by Lys-134.

Belongs to the LplA family. As to quaternary structure, monomer.

Its subcellular location is the cytoplasm. The catalysed reaction is L-lysyl-[lipoyl-carrier protein] + (R)-lipoate + ATP = N(6)-[(R)-lipoyl]-L-lysyl-[lipoyl-carrier protein] + AMP + diphosphate + H(+). The protein operates within protein modification; protein lipoylation via exogenous pathway; protein N(6)-(lipoyl)lysine from lipoate: step 1/2. Its pathway is protein modification; protein lipoylation via exogenous pathway; protein N(6)-(lipoyl)lysine from lipoate: step 2/2. Its function is as follows. Catalyzes both the ATP-dependent activation of exogenously supplied lipoate to lipoyl-AMP and the transfer of the activated lipoyl onto the lipoyl domains of lipoate-dependent enzymes. In Escherichia coli O139:H28 (strain E24377A / ETEC), this protein is Lipoate-protein ligase A.